A 294-amino-acid chain; its full sequence is 4-hydroxy-tetrahydrodipicolinate synthase (294 aa).

Threonine 45 lines the pyruvate pocket. Tyrosine 133 (proton donor/acceptor) is an active-site residue. Lysine 162 functions as the Schiff-base intermediate with substrate in the catalytic mechanism. Isoleucine 204 is a binding site for pyruvate.

This sequence belongs to the DapA family. In terms of assembly, homotetramer; dimer of dimers.

It is found in the cytoplasm. The catalysed reaction is L-aspartate 4-semialdehyde + pyruvate = (2S,4S)-4-hydroxy-2,3,4,5-tetrahydrodipicolinate + H2O + H(+). The protein operates within amino-acid biosynthesis; L-lysine biosynthesis via DAP pathway; (S)-tetrahydrodipicolinate from L-aspartate: step 3/4. In terms of biological role, catalyzes the condensation of (S)-aspartate-beta-semialdehyde [(S)-ASA] and pyruvate to 4-hydroxy-tetrahydrodipicolinate (HTPA). The polypeptide is 4-hydroxy-tetrahydrodipicolinate synthase (Bartonella quintana (strain Toulouse) (Rochalimaea quintana)).